The primary structure comprises 470 residues: Adenosylhomocysteinase (470 aa).

Substrate-binding residues include T61, D136, and E196. 197–199 (TTT) lines the NAD(+) pocket. The substrate site is built by K226 and D230. NAD(+) contacts are provided by residues N231, 260-265 (GYGDVG), E283, N318, 339-341 (IGH), and N384.

The protein belongs to the adenosylhomocysteinase family. Requires NAD(+) as cofactor.

The protein resides in the cytoplasm. The enzyme catalyses S-adenosyl-L-homocysteine + H2O = L-homocysteine + adenosine. It functions in the pathway amino-acid biosynthesis; L-homocysteine biosynthesis; L-homocysteine from S-adenosyl-L-homocysteine: step 1/1. In terms of biological role, may play a key role in the regulation of the intracellular concentration of adenosylhomocysteine. The protein is Adenosylhomocysteinase of Aromatoleum aromaticum (strain DSM 19018 / LMG 30748 / EbN1) (Azoarcus sp. (strain EbN1)).